The chain runs to 236 residues: MKNVMKLSVIALLTAAAVPAMAGKTEPYTQSGTNAREMLQEQAIHWISVDQIKQSLEGKAPINVSFDIDDTVMLFSSPCFYHGQQKFSPGKHDYLKNQDFWNEVNAGCDKYSIPKQIAIDLINMHQARGDQVYFFTGRTAGKVDGVTPILEKTFNIKNMHPVEFMGSRERTTKYNKTPAIISHKVSIHYGDSDDDVLAAKEAGVRGIRLMRAANSTYQPMPTLGGYGEEVLINSSY.

An N-terminal signal peptide occupies residues 1 to 22; it reads MKNVMKLSVIALLTAAAVPAMA. Asp-67 (nucleophile) is an active-site residue. Mg(2+) contacts are provided by Asp-67 and Asp-69. The active-site Proton donor is Asp-69. Substrate-binding positions include 136 to 137 and Lys-176; that span reads TG. Asp-191 contacts Mg(2+).

Belongs to the class B bacterial acid phosphatase family. In terms of assembly, homotetramer. It depends on Mg(2+) as a cofactor.

The protein resides in the periplasm. The catalysed reaction is a phosphate monoester + H2O = an alcohol + phosphate. In terms of biological role, dephosphorylates several organic phosphate monoesters. Also has a phosphotransferase activity catalyzing the transfer of low-energy phosphate groups from organic phosphate monoesters to free hydroxyl groups of various organic compounds. In Haemophilus influenzae (strain ATCC 51907 / DSM 11121 / KW20 / Rd), this protein is Class B acid phosphatase (aphA).